Here is a 231-residue protein sequence, read N- to C-terminus: Thiamine import ATP-binding protein ThiQ (231 aa).

The ABC transporter domain maps to 2 to 230 (LHLDRLLIRQ…PPPALRAYLG (229 aa)). Residue 32–39 (GPSGGGKS) participates in ATP binding.

It belongs to the ABC transporter superfamily. Thiamine importer (TC 3.A.1.19.1) family. The complex is composed of two ATP-binding proteins (ThiQ), two transmembrane proteins (ThiP) and a solute-binding protein (ThiB).

The protein localises to the cell inner membrane. It carries out the reaction thiamine(out) + ATP + H2O = thiamine(in) + ADP + phosphate + H(+). Functionally, part of the ABC transporter complex ThiBPQ involved in thiamine import. Responsible for energy coupling to the transport system. The protein is Thiamine import ATP-binding protein ThiQ of Cereibacter sphaeroides (strain ATCC 17023 / DSM 158 / JCM 6121 / CCUG 31486 / LMG 2827 / NBRC 12203 / NCIMB 8253 / ATH 2.4.1.) (Rhodobacter sphaeroides).